The chain runs to 247 residues: 2,3-bisphosphoglycerate-dependent phosphoglycerate mutase (247 aa).

Residues 8-15, 21-22, Arg60, 87-90, Lys98, 114-115, and 183-184 contribute to the substrate site; these read RHGESTWN, TG, ERHY, RR, and GN. His9 acts as the Tele-phosphohistidine intermediate in catalysis. Residue Glu87 is the Proton donor/acceptor of the active site.

The protein belongs to the phosphoglycerate mutase family. BPG-dependent PGAM subfamily. As to quaternary structure, homodimer.

The catalysed reaction is (2R)-2-phosphoglycerate = (2R)-3-phosphoglycerate. It participates in carbohydrate degradation; glycolysis; pyruvate from D-glyceraldehyde 3-phosphate: step 3/5. In terms of biological role, catalyzes the interconversion of 2-phosphoglycerate and 3-phosphoglycerate. The chain is 2,3-bisphosphoglycerate-dependent phosphoglycerate mutase from Paracidovorax citrulli (strain AAC00-1) (Acidovorax citrulli).